Here is a 469-residue protein sequence, read N- to C-terminus: Glutamate--tRNA ligase (469 aa).

Residues 9 to 19 (PSPTGFLHVGG) carry the 'HIGH' region motif. Residues cysteine 98, cysteine 100, cysteine 125, and aspartate 127 each contribute to the Zn(2+) site. Positions 236–240 (KLSKR) match the 'KMSKS' region motif. Lysine 239 contributes to the ATP binding site.

Belongs to the class-I aminoacyl-tRNA synthetase family. Glutamate--tRNA ligase type 1 subfamily. Monomer. Zn(2+) is required as a cofactor.

It localises to the cytoplasm. The enzyme catalyses tRNA(Glu) + L-glutamate + ATP = L-glutamyl-tRNA(Glu) + AMP + diphosphate. In terms of biological role, catalyzes the attachment of glutamate to tRNA(Glu) in a two-step reaction: glutamate is first activated by ATP to form Glu-AMP and then transferred to the acceptor end of tRNA(Glu). This is Glutamate--tRNA ligase from Shewanella sediminis (strain HAW-EB3).